We begin with the raw amino-acid sequence, 466 residues long: Uronate isomerase (466 aa).

This sequence belongs to the metallo-dependent hydrolases superfamily. Uronate isomerase family.

It carries out the reaction D-glucuronate = D-fructuronate. It catalyses the reaction aldehydo-D-galacturonate = keto-D-tagaturonate. It participates in carbohydrate metabolism; pentose and glucuronate interconversion. This is Uronate isomerase from Brucella canis (strain ATCC 23365 / NCTC 10854 / RM-666).